The sequence spans 640 residues: tRNA-dihydrouridine(47) synthase [NAD(P)(+)]-like (640 aa).

Low complexity predominate over residues 1-10 (MAEVAEVAAE). 2 disordered regions span residues 1–22 (MAEV…VGAC) and 47–106 (DKQE…PHMK). The residue at position 2 (alanine 2) is an N-acetylalanine. Over residues 64 to 91 (PEAKRIRLEDGQENGKTEVAVESHERQV) the composition is skewed to basic and acidic residues. The segment covering 92-106 (PKRARGQNKSRPHMK) has biased composition (basic residues). 2 C3H1-type zinc fingers span residues 110–140 (YDKE…HDVG) and 148–178 (ADLG…HLGP). A Phosphoserine modification is found at serine 267. Residues 301–303 (PLT) and glutamine 355 each bind FMN. Cysteine 386 acts as the Proton donor in catalysis. Lysine 406 is covalently cross-linked (Glycyl lysine isopeptide (Lys-Gly) (interchain with G-Cter in SUMO2)). Residues lysine 425, histidine 455, 487 to 489 (NGD), and 510 to 511 (AR) each bind FMN.

The protein belongs to the Dus family. Dus3 subfamily. It depends on FMN as a cofactor.

The catalysed reaction is 5,6-dihydrouridine(47) in tRNA + NAD(+) = uridine(47) in tRNA + NADH + H(+). The enzyme catalyses 5,6-dihydrouridine(47) in tRNA + NADP(+) = uridine(47) in tRNA + NADPH + H(+). It carries out the reaction a 5,6-dihydrouridine in mRNA + NAD(+) = a uridine in mRNA + NADH + H(+). It catalyses the reaction a 5,6-dihydrouridine in mRNA + NADP(+) = a uridine in mRNA + NADPH + H(+). Catalyzes the synthesis of dihydrouridine, a modified base, in various RNAs, such as tRNAs, mRNAs and some long non-coding RNAs (lncRNAs). Mainly modifies the uridine in position 47 (U47) in the D-loop of most cytoplasmic tRNAs. Also able to mediate the formation of dihydrouridine in some mRNAs, thereby regulating their translation. The sequence is that of tRNA-dihydrouridine(47) synthase [NAD(P)(+)]-like from Rattus norvegicus (Rat).